The following is a 1171-amino-acid chain: ATP-dependent helicase/deoxyribonuclease subunit B (1171 aa).

The 343-residue stretch at 1 to 343 folds into the UvrD-like helicase ATP-binding domain; it reads MSLRFVIGRA…LVAEENYRYR (343 aa). An ATP-binding site is contributed by 8–15; the sequence is GRAGSGKS. In terms of domain architecture, UvrD-like helicase C-terminal spans 281–587; that stretch reads MEQPRFHSPA…QFANIPPSLD (307 aa). Residues C805, C1129, C1132, and C1138 each contribute to the [4Fe-4S] cluster site.

It belongs to the helicase family. AddB/RexB type 1 subfamily. As to quaternary structure, heterodimer of AddA and AddB. Mg(2+) serves as cofactor. [4Fe-4S] cluster is required as a cofactor.

The heterodimer acts as both an ATP-dependent DNA helicase and an ATP-dependent, dual-direction single-stranded exonuclease. Recognizes the chi site generating a DNA molecule suitable for the initiation of homologous recombination. The AddB subunit has 5' -&gt; 3' nuclease activity but not helicase activity. The sequence is that of ATP-dependent helicase/deoxyribonuclease subunit B from Bacillus thuringiensis subsp. konkukian (strain 97-27).